Consider the following 467-residue polypeptide: UDP-N-acetylmuramate--L-alanine ligase (467 aa).

123 to 129 lines the ATP pocket; sequence GTHGKST.

The protein belongs to the MurCDEF family.

The protein localises to the cytoplasm. The enzyme catalyses UDP-N-acetyl-alpha-D-muramate + L-alanine + ATP = UDP-N-acetyl-alpha-D-muramoyl-L-alanine + ADP + phosphate + H(+). Its pathway is cell wall biogenesis; peptidoglycan biosynthesis. In terms of biological role, cell wall formation. This Arthrobacter sp. (strain FB24) protein is UDP-N-acetylmuramate--L-alanine ligase.